Here is a 968-residue protein sequence, read N- to C-terminus: RNA polymerase-associated protein RapA (968 aa).

Positions 164 to 334 (EVGQRHAPRV…FARLRLLDPD (171 aa)) constitute a Helicase ATP-binding domain. 177–184 (DEVGLGKT) serves as a coordination point for ATP. Positions 280–283 (DEAH) match the DEAH box motif. A Helicase C-terminal domain is found at 490–644 (RVEWLLNYLV…TCPTGRTIYD (155 aa)).

The protein belongs to the SNF2/RAD54 helicase family. RapA subfamily. As to quaternary structure, interacts with the RNAP. Has a higher affinity for the core RNAP than for the holoenzyme. Its ATPase activity is stimulated by binding to RNAP.

Its function is as follows. Transcription regulator that activates transcription by stimulating RNA polymerase (RNAP) recycling in case of stress conditions such as supercoiled DNA or high salt concentrations. Probably acts by releasing the RNAP, when it is trapped or immobilized on tightly supercoiled DNA. Does not activate transcription on linear DNA. Probably not involved in DNA repair. The protein is RNA polymerase-associated protein RapA of Yersinia pseudotuberculosis serotype O:1b (strain IP 31758).